Consider the following 86-residue polypeptide: Class II hydrophobin 2 (86 aa).

Residues 1-15 (MQFFAVALFATSALA) form the signal peptide. 4 disulfides stabilise this stretch: Cys18/Cys67, Cys28/Cys58, Cys29/Cys41, and Cys68/Cys79.

Belongs to the cerato-ulmin hydrophobin family. As to quaternary structure, homodimer. Homodimers further self-assemble to form highly ordered films at water-air interfaces through intermolecular interactions.

It is found in the secreted. The protein localises to the spore wall. The protein resides in the cell wall. Its function is as follows. Aerial growth, conidiation, and dispersal of filamentous fungi in the environment rely upon a capability of their secreting small amphipathic proteins called hydrophobins (HPBs) with low sequence identity. Class I can self-assemble into an outermost layer of rodlet bundles on aerial cell surfaces, conferring cellular hydrophobicity that supports fungal growth, development and dispersal; whereas Class II form highly ordered films at water-air interfaces through intermolecular interactions but contribute nothing to the rodlet structure. Hbf2 is a class II hydrophobin that is involved in sporuration. This chain is Class II hydrophobin 2, found in Hypocrea jecorina (Trichoderma reesei).